The sequence spans 96 residues: uncharacterized protein (96 aa).

This is an uncharacterized protein from Methanocaldococcus jannaschii (strain ATCC 43067 / DSM 2661 / JAL-1 / JCM 10045 / NBRC 100440) (Methanococcus jannaschii).